We begin with the raw amino-acid sequence, 249 residues long: Sugar fermentation stimulation protein homolog (249 aa).

The protein belongs to the SfsA family.

In Rhizobium rhizogenes (strain K84 / ATCC BAA-868) (Agrobacterium radiobacter), this protein is Sugar fermentation stimulation protein homolog.